The chain runs to 645 residues: Sodium/potassium/calcium exchanger 3 (645 aa).

An N-terminal signal peptide occupies residues 1 to 43 (MPPPGDQDCARRRSRRRRRDLLLSQLCFLASVALLLWSLSSLR). Residues 44–106 (EQKELDLMDL…DIFSNEDRRQ (63 aa)) lie on the Extracellular side of the membrane. N-linked (GlcNAc...) asparagine glycosylation is found at Asn-70 and Asn-85. The helical transmembrane segment at 107–127 (GAVVLHVLCAMYMFYALAIVC) threads the bilayer. The Cytoplasmic portion of the chain corresponds to 128–151 (DDFFVPSLEKICERLHLSEDVAGA). The stretch at 148–188 (VAGATFMAAGSSAPELFTSVIGVFITKGDVGVGTIVGSAVF) is one Alpha-1 repeat. A helical transmembrane segment spans residues 152–172 (TFMAAGSSAPELFTSVIGVFI). The Extracellular segment spans residues 173 to 181 (TKGDVGVGT). A helical transmembrane segment spans residues 182–202 (IVGSAVFNILCIIGVCGLFAG). Residues 203–209 (QVVALSS) lie on the Cytoplasmic side of the membrane. A helical transmembrane segment spans residues 210–230 (WCLLRDSIYYTLSVVALIVFI). The Extracellular segment spans residues 231–234 (YDEK). The helical transmembrane segment at 235–255 (VSWWESLVLVLMYLIYIVIMK) threads the bilayer. Over 256-486 (YNACIHQCFE…WFMVTFASST (231 aa)) the chain is Cytoplasmic. Ser-307 carries the post-translational modification Phosphoserine. Disordered stretches follow at residues 379 to 398 (TVEN…NGTR) and 404 to 442 (AETD…PFDP). Positions 404 to 435 (AETDNETENENEDNENNENDEEEEEDEDDDEG) are enriched in acidic residues. A helical membrane pass occupies residues 487–507 (LWIAAFSYMMVWMVTIIGYTL). Topologically, residues 508-512 (GIPDV) are extracellular. The helical transmembrane segment at 513–533 (IMGITFLAAGTSVPDCMASLI) threads the bilayer. The stretch at 520–551 (AAGTSVPDCMASLIVARQGMGDMAVSNSIGSN) is one Alpha-2 repeat. At 534–551 (VARQGMGDMAVSNSIGSN) the chain is on the cytoplasmic side. The chain crosses the membrane as a helical span at residues 552 to 572 (VFDILIGLGLPWALQTLAVDY). Over 573–582 (GSYIRLNSRG) the chain is Extracellular. A helical membrane pass occupies residues 583-603 (LIYSVGLLLASVFVTVFGVHL). The Cytoplasmic portion of the chain corresponds to 604 to 617 (NKWQLDKKLGCGCL). A helical transmembrane segment spans residues 618–638 (FLYGVFLCFSIMTEFNVFTFV). At 639-645 (NLPMCGD) the chain is on the extracellular side.

Belongs to the Ca(2+):cation antiporter (CaCA) (TC 2.A.19) family. SLC24A subfamily. As to expression, abundant in the brain. Highest levels found in selected thalamic nuclei, hippocampal CA1 neurons and in layer IV of the cerebral cortex. Expressed in dental tissues.

It localises to the cell membrane. The catalysed reaction is Ca(2+)(out) + K(+)(out) + 4 Na(+)(in) = Ca(2+)(in) + K(+)(in) + 4 Na(+)(out). Its function is as follows. Calcium, potassium:sodium antiporter that transports 1 Ca(2+) and 1 K(+) in exchange for 4 Na(+). The polypeptide is Sodium/potassium/calcium exchanger 3 (Slc24a3) (Mus musculus (Mouse)).